The chain runs to 836 residues: Protein O-mannosyl-transferase TMTC2 (836 aa).

A helical transmembrane segment spans residues 1–21 (MIAELVSSALGLALYLNTLSA). Residues 22–77 (DFCYDDSRAIKTNQDLLPETPWTHIFYNDFWGTLLTHSGSHKSYRPLCTLSFRLNH) are Extracellular-facing. The helical transmembrane segment at 78 to 98 (AIGGLNPWSYHLVNVLLHAAV) threads the bilayer. At 99-107 (TGLFTRFSK) the chain is on the cytoplasmic side. Residues 108 to 128 (ALLGDGYWTFMAGLMFASHPI) traverse the membrane as a helical segment. Residues 129–132 (HTEA) are Extracellular-facing. The helical transmembrane segment at 133–153 (VAGIVGRADVGASLFFLLSLL) threads the bilayer. The Cytoplasmic segment spans residues 154–168 (CYIKHCSTRGYSART). 2 helical membrane passes run 169 to 184 (WGWF…CSML) and 185 to 204 (WKEQ…VFVF). Over 205-220 (HRLKMKQILPTIYKRK) the chain is Cytoplasmic. The chain crosses the membrane as a helical span at residues 221–241 (NLSLFLSISLLTFWGTCLLGA). Over 242–312 (RLYWMGNKPP…KTVCDWRNLH (71 aa)) the chain is Extracellular. The helical transmembrane segment at 313–333 (TVAFYSGLLLLAYCGLKNPSL) threads the bilayer. The Cytoplasmic segment spans residues 334–392 (EGECNGKALTNGKQNANGHSCHSDVEYRNSEMKPSFASKVENGIKNCVPQRTQLPSTEN). The helical transmembrane segment at 393-415 (IVILSLSLLIIPFIPATNLFFYV) threads the bilayer. Topologically, residues 416–422 (GFVIAER) are extracellular. Residues 423–443 (VLYIPSMGFCLLITVGARALY) form a helical membrane-spanning segment. Residues 444–449 (VKVQKR) lie on the Cytoplasmic side of the membrane. The chain crosses the membrane as a helical span at residues 450–470 (FLKSLVFYATATLIVFYGVKT). The Extracellular portion of the chain corresponds to 471–836 (AIRNGDWQNE…EKQGLKTSKT (366 aa)). TPR repeat units follow at residues 493 to 526 (AKAW…RSNM), 527 to 560 (ADML…RPTL), 561 to 594 (ASAY…PDEN), 606 to 639 (TSCL…MPRH), 643 to 676 (QSLY…KTDH), 677 to 710 (IPAH…DPTK), 711 to 744 (GNCY…DNTE), 745 to 778 (FDVV…RPNY), and 779 to 812 (PAAL…KPDD).

The protein belongs to the TMTC family.

It is found in the membrane. The protein localises to the endoplasmic reticulum. The enzyme catalyses a di-trans,poly-cis-dolichyl beta-D-mannosyl phosphate + L-seryl-[protein] = 3-O-(alpha-D-mannosyl)-L-seryl-[protein] + a di-trans,poly-cis-dolichyl phosphate + H(+). It carries out the reaction a di-trans,poly-cis-dolichyl beta-D-mannosyl phosphate + L-threonyl-[protein] = 3-O-(alpha-D-mannosyl)-L-threonyl-[protein] + a di-trans,poly-cis-dolichyl phosphate + H(+). Its pathway is protein modification; protein glycosylation. Functionally, transfers mannosyl residues to the hydroxyl group of serine or threonine residues. The 4 members of the TMTC family are O-mannosyl-transferases dedicated primarily to the cadherin superfamily, each member seems to have a distinct role in decorating the cadherin domains with O-linked mannose glycans at specific regions. Also acts as O-mannosyl-transferase on other proteins such as PDIA3. The chain is Protein O-mannosyl-transferase TMTC2 from Mus musculus (Mouse).